Consider the following 93-residue polypeptide: N-acetyl-S-hydroxy-L-cysteine reductase (93 aa).

The Glutaredoxin domain occupies 1–93; it reads MSDVVNIVVW…NHAQIKEAKR (93 aa). A disulfide bridge links Cys-15 with Cys-18.

This sequence belongs to the glutaredoxin family.

It carries out the reaction N-acetyl-S-hydroxy-L-cysteine + AH2 = N-acetyl-L-cysteine + A + H2O. Its pathway is amino-acid metabolism. In terms of biological role, involved in a cysteine salvage pathway from S-alkylcysteine. Catalyzes the reduction of N-acetyl-S-hydroxy-L-cysteine (N-acetyl-L-cysteine sulfenic acid) to N-acetyl-L-cysteine. This pathway is likely important in the catabolism of alkylated cysteine generated by proteolysis of alkylated glutathione formed in the detoxification of a wide range of electrophiles. The protein is N-acetyl-S-hydroxy-L-cysteine reductase of Bacillus subtilis (strain 168).